A 625-amino-acid chain; its full sequence is Threonine--tRNA ligase (625 aa).

Positions 1–143 are editing domain; sequence MRILLIHSDY…ELSRTIIPEG (143 aa). Positions 206-505 are catalytic; it reads PHVKLMLEHE…MQEGKKPMLP (300 aa). Cys-298, His-350, and His-474 together coordinate Zn(2+).

Belongs to the class-II aminoacyl-tRNA synthetase family. Homodimer. Zn(2+) serves as cofactor.

Its subcellular location is the cytoplasm. It carries out the reaction tRNA(Thr) + L-threonine + ATP = L-threonyl-tRNA(Thr) + AMP + diphosphate + H(+). Functionally, catalyzes the attachment of threonine to tRNA(Thr) in a two-step reaction: L-threonine is first activated by ATP to form Thr-AMP and then transferred to the acceptor end of tRNA(Thr). Also edits incorrectly charged L-seryl-tRNA(Thr). The sequence is that of Threonine--tRNA ligase from Pyrococcus horikoshii (strain ATCC 700860 / DSM 12428 / JCM 9974 / NBRC 100139 / OT-3).